The sequence spans 418 residues: MTIEQFNFAGKKAFVRVDFNVPLDDNFKITDDTRIRAALPTLRKIIADGGMTIIGSHLGRPKGVAPEFSLRHILPHVSELLGVDVLFADDCIGADAMDKAAKLKAGQVLLLENLRFYAEEEGKPRGLSDDASDEEKAAAKKAVKAAQKEFTQKLASMADCYVNDAFGTAHRAHASTALIADYFDRDHKMFGYLMEKEVKAVERVLHDIKRPFTAIMGGSKVSTKIEIIENLLNKVDNLILTGGMTYTFTKAAGGRIGLSIVEDDKLDLARDIVKKAAEKGVNLILSVDTKVADRFDNDAATQVCSNMEIPDDWMGMDIGPRSIEKFRKVILESKTILWNGPTGVFEFDNFSIGSKAVGEAIVEATANGAFSLVGGGDSVACVNKFGLADKVSYVSTGGGALLEAIEGKTLPGIAAIQG.

Substrate-binding positions include 18 to 20 (DFN), R34, 57 to 60 (HLGR), R115, and R171. Residues K224, G315, E346, and 375-378 (GGDS) each bind ATP.

Belongs to the phosphoglycerate kinase family. Monomer.

Its subcellular location is the cytoplasm. The catalysed reaction is (2R)-3-phosphoglycerate + ATP = (2R)-3-phospho-glyceroyl phosphate + ADP. It functions in the pathway carbohydrate degradation; glycolysis; pyruvate from D-glyceraldehyde 3-phosphate: step 2/5. The chain is Phosphoglycerate kinase from Porphyromonas gingivalis (strain ATCC BAA-308 / W83).